A 330-amino-acid polypeptide reads, in one-letter code: DNA-directed RNA polymerase subunit alpha (330 aa).

The tract at residues 1-237 is alpha N-terminal domain (alpha-NTD); sequence MYTEINEMLT…RQLHAFVDMK (237 aa). The interval 251–330 is alpha C-terminal domain (alpha-CTD); the sequence is FDPVLLRSVD…ENWPPASLGE (80 aa).

It belongs to the RNA polymerase alpha chain family. Homodimer. The RNAP catalytic core consists of 2 alpha, 1 beta, 1 beta' and 1 omega subunit. When a sigma factor is associated with the core the holoenzyme is formed, which can initiate transcription.

The enzyme catalyses RNA(n) + a ribonucleoside 5'-triphosphate = RNA(n+1) + diphosphate. Functionally, DNA-dependent RNA polymerase catalyzes the transcription of DNA into RNA using the four ribonucleoside triphosphates as substrates. This chain is DNA-directed RNA polymerase subunit alpha, found in Legionella pneumophila (strain Corby).